The primary structure comprises 401 residues: Ninja-family protein MODD (401 aa).

2 disordered regions span residues 95–135 and 215–238; these read KQGV…GEGR and TGNKKTGGNVNHSSDRNRCTGLPP. Positions 105 to 130 are enriched in low complexity; it reads RPSGGAEAEPAAARLPASGSPSSGSS. The span at 217 to 226 shows a compositional bias: polar residues; sequence NKKTGGNVNH.

The protein belongs to the Ninja family. Interacts with BZIP46, TPR3 and PUB70.

It localises to the nucleus. In terms of biological role, acts as a negative regulator of abscisic acid (ABA) signaling and drought tolerance. Mediates deactivation and degradation of BZIP46, a positive regulator of ABA signaling and drought stress tolerance. Represses BZIP46 activity via interaction with the TPR3-HDAC1 corepressor complex and down-regulation of the histone acetylation level at BZIP46 target genes. Promotes BZIP46 degradation via interaction with the U-box type ubiquitin E3 ligase PUB70. This chain is Ninja-family protein MODD, found in Oryza sativa subsp. japonica (Rice).